A 205-amino-acid chain; its full sequence is Ribonuclease HII (205 aa).

Positions 15 to 205 constitute an RNase H type-2 domain; it reads SRVCGIDEAG…SFKLRKLGEK (191 aa). A divalent metal cation-binding residues include D21, E22, and D117.

Belongs to the RNase HII family. Mn(2+) serves as cofactor. It depends on Mg(2+) as a cofactor.

The protein resides in the cytoplasm. The catalysed reaction is Endonucleolytic cleavage to 5'-phosphomonoester.. Functionally, endonuclease that specifically degrades the RNA of RNA-DNA hybrids. The sequence is that of Ribonuclease HII from Chlorobaculum parvum (strain DSM 263 / NCIMB 8327) (Chlorobium vibrioforme subsp. thiosulfatophilum).